We begin with the raw amino-acid sequence, 289 residues long: Probable acetolactate synthase small subunit (289 aa).

Ser-34 carries the phosphoserine modification. Positions 72-149 (VFNCLVQNEP…AVLDYTGTSM (78 aa)) constitute an ACT domain.

The protein belongs to the acetolactate synthase small subunit family.

It is found in the cytoplasm. Its pathway is amino-acid biosynthesis; L-isoleucine biosynthesis; L-isoleucine from 2-oxobutanoate: step 1/4. The protein operates within amino-acid biosynthesis; L-valine biosynthesis; L-valine from pyruvate: step 1/4. Functionally, stimulates activity of the acetolactate synthase catalytic subunit ilv1. In Schizosaccharomyces pombe (strain 972 / ATCC 24843) (Fission yeast), this protein is Probable acetolactate synthase small subunit.